The sequence spans 337 residues: Inositol 2-dehydrogenase (337 aa).

This sequence belongs to the Gfo/Idh/MocA family. Homotetramer.

The enzyme catalyses myo-inositol + NAD(+) = scyllo-inosose + NADH + H(+). Its function is as follows. Involved in the oxidation of myo-inositol (MI) to 2-keto-myo-inositol (2KMI or 2-inosose). In Burkholderia cenocepacia (strain HI2424), this protein is Inositol 2-dehydrogenase.